The following is a 503-amino-acid chain: Beta-mannosyltransferase 4 (503 aa).

At 1-24 (MKLDTQQISHLLSRQMYHLAPRKK) the chain is on the cytoplasmic side. The helical transmembrane segment at 25 to 45 (LLIWGGSLGFVLLLLIVASSH) threads the bilayer. Residues 46 to 503 (QRIRSTILHR…QYCQRYGELH (458 aa)) lie on the Extracellular side of the membrane. Residue asparagine 468 is glycosylated (N-linked (GlcNAc...) asparagine).

Belongs to the BMT family.

It localises to the membrane. In terms of biological role, beta-mannosyltransferase involved in cell wall biosynthesis. Responsible for addition of a hexose to the beta-mannose chain. This chain is Beta-mannosyltransferase 4 (BMT4), found in Komagataella phaffii (strain ATCC 76273 / CBS 7435 / CECT 11047 / NRRL Y-11430 / Wegner 21-1) (Yeast).